The primary structure comprises 699 residues: uncharacterized protein (699 aa).

3 disordered regions span residues 175 to 208 (PTLG…ASLS), 289 to 364 (PTAK…EEPD), and 539 to 603 (RAKE…KEYL). Basic and acidic residues predominate over residues 183–194 (PSKHGDHSDSKT). A compositionally biased stretch (polar residues) spans 195–208 (YESPISNSQAASLS). A compositionally biased stretch (basic residues) spans 308–322 (SKHKKRPKRLSKFKQ). Residues 323–338 (AKLETKKSGNKDHATS) are compositionally biased toward basic and acidic residues. Composition is skewed to polar residues over residues 339-360 (SEKL…SSSI) and 548-573 (HSNA…NTKL). The segment covering 574–603 (NPKEEDKSTVESELKAPPKEKSSETSKEYL) has biased composition (basic and acidic residues).

The protein resides in the cytoplasm. This is an uncharacterized protein from Schizosaccharomyces pombe (strain 972 / ATCC 24843) (Fission yeast).